We begin with the raw amino-acid sequence, 782 residues long: Nucleolar RNA helicase 2 (782 aa).

The tract at residues 1–184 (MPGKLRSASK…IPVEQKEGAF (184 aa)) is disordered. Phosphoserine is present on residues Ser7 and Ser13. Basic and acidic residues-rich tracts occupy residues 26 to 42 (PSEK…KTDE) and 99 to 117 (EPLE…KAEE). At Lys39 the chain carries N6-acetyllysine. A Glycyl lysine isopeptide (Lys-Gly) (interchain with G-Cter in SUMO1); alternate cross-link involves residue Lys114. A Glycyl lysine isopeptide (Lys-Gly) (interchain with G-Cter in SUMO2); alternate cross-link involves residue Lys114. A Phosphoserine modification is found at Ser119. Over residues 134-143 (GKEANGDVGE) the composition is skewed to basic and acidic residues. Lys135 is modified (N6-acetyllysine). A phosphoserine mark is found at Ser145 and Ser169. Residues 172 to 181 (EKEIPVEQKE) are compositionally biased toward basic and acidic residues. The Q motif motif lies at 182-210 (GAFSNFPISEETVKLLKARGVNFLFPIQA). Positions 213–392 (FHHVYSGKDL…KKYMKSTYEQ (180 aa)) constitute a Helicase ATP-binding domain. 226–233 (ARTGTGKT) is an ATP binding site. Phosphothreonine is present on Thr292. Positions 335–338 (DEVD) match the DEAD box motif. The Helicase C-terminal domain occupies 425–569 (DVIRVYSGHQ…GVPSATEIIK (145 aa)). Ser563 bears the Phosphoserine mark. An N6-acetyllysine modification is found at Lys596. The tract at residues 704 to 782 (ATEQPELEGP…KRSFSKAFGQ (79 aa)) is disordered. Repeat copies occupy residues 720-724 (GRGQR), 731-735 (FRGQR), and 741-747 (FRGQGQR). The segment at 720 to 747 (GRGQRDGSRGSFRGQRGGSRNFRGQGQR) is 3 X 5 AA repeats. Positions 728–756 (RGSFRGQRGGSRNFRGQGQRGGSRNFRGQ) are enriched in low complexity. Lys778 carries the post-translational modification N6-acetyllysine.

The protein belongs to the DEAD box helicase family. DDX21/DDX50 subfamily. As to quaternary structure, homodimer; homodimerizes via its N-terminus. Found in a multi-helicase-TICAM1 complex at least composed of DHX36, DDX1, DDX21 and TICAM1; this complex exists in resting cells with or without poly(I:C) RNA ligand stimulation. Interacts (via C-terminus) with TICAM1 (via TIR domain). Interacts with DHX36 (via C-terminus); this interaction serves as bridges to TICAM1. Interacts (via C-terminus) with DDX1 (via B30.2/SPRY domain); this interaction serves as bridges to TICAM1. Component of the B-WICH complex, at least composed of SMARCA5/SNF2H, BAZ1B/WSTF, SF3B1, DEK, MYO1C, ERCC6, MYBBP1A and DDX21. Interacts with C1QBP. Interacts with JUN. Interacts with WDR46. Interacts with MCM3AP. Interacts with WDR43. Interacts with KPNA3. Interacts with GID4. In terms of processing, acetylation by CREBBP/CBP inhibits the helicase activity. Deacetylation by SIRT7 promotes the helicase activity and overcomes R-loop-mediated stalling of RNA polymerases.

Its subcellular location is the nucleus. The protein resides in the nucleolus. It localises to the nucleoplasm. It is found in the cytoplasm. The protein localises to the cytosol. Its subcellular location is the mitochondrion. The enzyme catalyses ATP + H2O = ADP + phosphate + H(+). With respect to regulation, acetylation inhibits the helicase activity. Functionally, RNA helicase that acts as a sensor of the transcriptional status of both RNA polymerase (Pol) I and II: promotes ribosomal RNA (rRNA) processing and transcription from polymerase II (Pol II). Binds various RNAs, such as rRNAs, snoRNAs, 7SK and, at lower extent, mRNAs. In the nucleolus, localizes to rDNA locus, where it directly binds rRNAs and snoRNAs, and promotes rRNA transcription, processing and modification. Required for rRNA 2'-O-methylation, possibly by promoting the recruitment of late-acting snoRNAs SNORD56 and SNORD58 with pre-ribosomal complexes. In the nucleoplasm, binds 7SK RNA and is recruited to the promoters of Pol II-transcribed genes: acts by facilitating the release of P-TEFb from inhibitory 7SK snRNP in a manner that is dependent on its helicase activity, thereby promoting transcription of its target genes. Functions as a cofactor for JUN-activated transcription: required for phosphorylation of JUN at 'Ser-77'. Can unwind double-stranded RNA (helicase) and can fold or introduce a secondary structure to a single-stranded RNA (foldase). Together with SIRT7, required to prevent R-loop-associated DNA damage and transcription-associated genomic instability: deacetylation by SIRT7 activates the helicase activity, thereby overcoming R-loop-mediated stalling of RNA polymerases. Involved in rRNA processing. May bind to specific miRNA hairpins. Component of a multi-helicase-TICAM1 complex that acts as a cytoplasmic sensor of viral double-stranded RNA (dsRNA) and plays a role in the activation of a cascade of antiviral responses including the induction of pro-inflammatory cytokines via the adapter molecule TICAM1. In Rattus norvegicus (Rat), this protein is Nucleolar RNA helicase 2 (Ddx21).